Reading from the N-terminus, the 208-residue chain is Imidazoleglycerol-phosphate dehydratase (208 aa).

The protein belongs to the imidazoleglycerol-phosphate dehydratase family.

The protein resides in the cytoplasm. It carries out the reaction D-erythro-1-(imidazol-4-yl)glycerol 3-phosphate = 3-(imidazol-4-yl)-2-oxopropyl phosphate + H2O. It participates in amino-acid biosynthesis; L-histidine biosynthesis; L-histidine from 5-phospho-alpha-D-ribose 1-diphosphate: step 6/9. This chain is Imidazoleglycerol-phosphate dehydratase, found in Anaeromyxobacter dehalogenans (strain 2CP-1 / ATCC BAA-258).